The sequence spans 578 residues: L-ascorbate oxidase (578 aa).

An N-terminal signal peptide occupies residues 1–28 (MASLGFLFFFLLPLILLELSSSRSVMAA). 2 consecutive Plastocyanin-like domains span residues 30–149 (TRHF…LIVE) and 161–328 (DGEF…NYLP). Cu cation-binding residues include H87, H89, H131, and H133. Intrachain disulfides connect C108-C565 and C207-C221. Residue N206 is glycosylated (N-linked (GlcNAc...) asparagine). Residues N349, N394, N438, and N451 are each glycosylated (N-linked (GlcNAc...) asparagine). In terms of domain architecture, Plastocyanin-like 3 spans 372-550 (HRRIILLNTQ…HMGMGVIFAE (179 aa)). The Cu cation site is built by H472, H475, H477, H533, C534, H535, H539, and M544.

The protein belongs to the multicopper oxidase family. Dimer. It depends on Cu cation as a cofactor. In terms of tissue distribution, highly expressed in young and growing tissues.

It localises to the secreted. The enzyme catalyses 4 L-ascorbate + O2 = 4 monodehydro-L-ascorbate radical + 2 H2O. May be involved in a redox system involving ascorbic acid. The chain is L-ascorbate oxidase (AAO) from Nicotiana tabacum (Common tobacco).